Here is a 439-residue protein sequence, read N- to C-terminus: uncharacterized protein (439 aa).

Positions 1 to 55 constitute a TRAM domain; that stretch reads MLEQVRIQKMVNGGYGLAHLSNGKVVLVEGAYPGEEVLIKTYREKRDFSFGKVVS. Residues Cys68, Cys74, Cys77, and Cys149 each contribute to the [4Fe-4S] cluster site. Residues Gln272, Tyr301, Glu322, and Asp367 each coordinate S-adenosyl-L-methionine. Cys394 serves as the catalytic Nucleophile.

Belongs to the class I-like SAM-binding methyltransferase superfamily. RNA M5U methyltransferase family.

This is an uncharacterized protein from Thermotoga maritima (strain ATCC 43589 / DSM 3109 / JCM 10099 / NBRC 100826 / MSB8).